The sequence spans 557 residues: Aspartate--tRNA ligase (557 aa).

Glu168 contributes to the L-aspartate binding site. Residues 192–195 form an aspartate region; sequence QIYK. Arg214 provides a ligand contact to L-aspartate. ATP is bound by residues 214–216 and Gln223; that span reads RDE. L-aspartate is bound at residue His423. Glu457 is a binding site for ATP. Arg464 serves as a coordination point for L-aspartate. 505 to 508 contributes to the ATP binding site; it reads GLDR.

It belongs to the class-II aminoacyl-tRNA synthetase family. Type 1 subfamily. As to quaternary structure, homodimer.

Its subcellular location is the cytoplasm. The catalysed reaction is tRNA(Asp) + L-aspartate + ATP = L-aspartyl-tRNA(Asp) + AMP + diphosphate. Catalyzes the attachment of L-aspartate to tRNA(Asp) in a two-step reaction: L-aspartate is first activated by ATP to form Asp-AMP and then transferred to the acceptor end of tRNA(Asp). The chain is Aspartate--tRNA ligase from Mycoplasma pneumoniae (strain ATCC 29342 / M129 / Subtype 1) (Mycoplasmoides pneumoniae).